A 59-amino-acid polypeptide reads, in one-letter code: Conotoxin mr5a (59 aa).

The first 22 residues, 1 to 22 (MRCLPVFVILLLLIASAPSVDA), serve as a signal peptide directing secretion. A propeptide spanning residues 23–48 (RPKTKDDMPLASFHDNAKRILQILQD) is cleaved from the precursor.

Post-translationally, contains 2 disulfide bonds that can be either 'C1-C3, C2-C4' or 'C1-C4, C2-C3', since these disulfide connectivities have been observed for conotoxins with cysteine framework V (for examples, see AC P0DQQ7 and AC P81755). In terms of tissue distribution, expressed by the venom duct.

The protein resides in the secreted. The chain is Conotoxin mr5a from Conus marmoreus (Marble cone).